The following is a 583-amino-acid chain: Putative fatty-acid--CoA ligase fadD25 (583 aa).

Helical transmembrane passes span 77–97, 109–129, and 229–249; these read YVVSFIASLQAGIVAVPLSIP, VFADTAPAIVLTASSVVDNVV, and FVLGLILPILAGIPAVLTSPI. Residues 353-375 are disordered; it reads IVQFDPQKLPDGQAERTESDGGT.

It belongs to the ATP-dependent AMP-binding enzyme family.

The protein localises to the cell membrane. In Mycobacterium tuberculosis (strain CDC 1551 / Oshkosh), this protein is Putative fatty-acid--CoA ligase fadD25 (fadD25).